The chain runs to 470 residues: Putative multidrug resistance protein MdtD (470 aa).

Topologically, residues 1–11 (MTELPDNTRWQ) are periplasmic. Residues 12–32 (LWIVAFGFFMQSLDTTIVNTA) traverse the membrane as a helical segment. Topologically, residues 33–48 (LPSMAKSLGESPLHMH) are cytoplasmic. Residues 49–69 (MVVVSYVLTVAVMLPASGWLA) form a helical membrane-spanning segment. At 70–76 (DKIGVRN) the chain is on the periplasmic side. Residues 77–97 (IFFAAIVLFTLGSLFCALSGT) traverse the membrane as a helical segment. Topologically, residues 98-101 (LNQL) are cytoplasmic. Residues 102 to 124 (VLARVLQGVGGAMMVPVGRLTVM) form a helical membrane-spanning segment. Residues 125 to 137 (KIVPRAQYMAAMT) are Periplasmic-facing. Residues 138 to 158 (FVTLPGQIGPLLGPALGGVLV) form a helical membrane-spanning segment. Topologically, residues 159 to 164 (EYASWH) are cytoplasmic. Residues 165 to 185 (WIFLINIPVGIVGAMATFMLM) form a helical membrane-spanning segment. Residues 186-196 (PNYTIETRRFD) are Periplasmic-facing. The helical transmembrane segment at 197–217 (LPGFLLLAIGMAVLTLALDGS) threads the bilayer. Topologically, residues 218-224 (KSMGISP) are cytoplasmic. The helical transmembrane segment at 225-245 (WTLAGLAAGGAAAILLYLFHA) threads the bilayer. The Periplasmic segment spans residues 246–262 (KKSSGALFSLRLFRTPT). The chain crosses the membrane as a helical span at residues 263 to 283 (FSLGLLGSFAGRIGSGMLPFM). Residues 284–285 (TP) are Cytoplasmic-facing. Residues 286–306 (VFLQIGLGFSPFHAGLMMIPM) form a helical membrane-spanning segment. Over 307–341 (VLGSMGMKRIVVQIVNRFGYRRVLVATTLGLALVS) the chain is Periplasmic. The chain crosses the membrane as a helical span at residues 342 to 362 (LLFMSVALLGWYYLLPLVLLL). Topologically, residues 363 to 395 (QGMVNSARFSSMNTLTLKDLPDTLASSGNSLLS) are cytoplasmic. Residues 396–416 (MIMQLSMSIGVTIAGMLLGMF) traverse the membrane as a helical segment. Over 417–430 (GQQHIGIDSSATHH) the chain is Periplasmic. Residues 431 to 451 (VFMYTWLCMAVIIALPAIIFA) form a helical membrane-spanning segment. The Cytoplasmic segment spans residues 452–470 (RVPNDTQQNMVISRRKRSL).

This sequence belongs to the major facilitator superfamily. TCR/Tet family.

It localises to the cell inner membrane. The sequence is that of Putative multidrug resistance protein MdtD from Salmonella paratyphi A (strain ATCC 9150 / SARB42).